The primary structure comprises 769 residues: Cullin-3 (769 aa).

Residues 614–655 (DRELPSTTSSTTTTTTTATSSSTSTSPSSSSSSISTPTPSKS) are disordered. The segment covering 618–653 (PSTTSSTTTTTTTATSSSTSTSPSSSSSSISTPTPS) has biased composition (low complexity). One can recognise a Cullin neddylation domain in the interval 699 to 761 (DRKHQIEASI…REYLERSKQD (63 aa)). A Glycyl lysine isopeptide (Lys-Gly) (interchain with G-Cter in NEDD8) cross-link involves residue Lys-713.

The protein belongs to the cullin family. In terms of processing, neddylated. Deneddylated via its interaction with the COP9 signalosome (CSN) complex.

Its subcellular location is the nucleus. It functions in the pathway protein modification; protein ubiquitination. In terms of biological role, probable core component of cullin-based SCF-like E3 ubiquitin-protein ligase complexes which mediate the ubiquitination and subsequent proteasomal degradation of target proteins. The E3 ubiquitin-protein ligase activity of the complex is dependent on the neddylation of the cullin subunit. The protein is Cullin-3 (culC) of Dictyostelium discoideum (Social amoeba).